The sequence spans 225 residues: Protein E26 (225 aa).

Interacts with proteins IE0 and IE1. Interacts with protein FP25K. Interacts with host importin alpha-16. Palmitoylated.

It localises to the host nucleus inner membrane. The protein localises to the virion. The protein resides in the host cytoplasm. It is found in the host nucleus. Functionally, plays a role in the sorting of ODV envelope proteins to the host inner nuclear membrane. May facilitate the fusion and release of nucleocapsids into the cytoplasm. Modulates the expression levels of IE0 and IE1. This Lepidoptera (butterflies and moths) protein is Protein E26 (DA26).